Here is a 592-residue protein sequence, read N- to C-terminus: Isocitrate dehydrogenase kinase/phosphatase 1 (592 aa).

ATP-binding positions include 337–343 and Lys358; that span reads APGTPGM. Residue Asp393 is part of the active site.

Belongs to the AceK family.

It localises to the cytoplasm. It catalyses the reaction L-seryl-[isocitrate dehydrogenase] + ATP = O-phospho-L-seryl-[isocitrate dehydrogenase] + ADP + H(+). Functionally, bifunctional enzyme which can phosphorylate or dephosphorylate isocitrate dehydrogenase (IDH) on a specific serine residue. This is a regulatory mechanism which enables bacteria to bypass the Krebs cycle via the glyoxylate shunt in response to the source of carbon. When bacteria are grown on glucose, IDH is fully active and unphosphorylated, but when grown on acetate or ethanol, the activity of IDH declines drastically concomitant with its phosphorylation. This chain is Isocitrate dehydrogenase kinase/phosphatase 1, found in Pseudoalteromonas translucida (strain TAC 125).